The following is a 360-amino-acid chain: Homoserine O-succinyltransferase (360 aa).

Residue Cys-146 is the Acyl-thioester intermediate of the active site. Substrate is bound by residues Lys-167 and Ser-196. The Proton acceptor role is filled by His-239. Glu-241 is an active-site residue. Arg-253 lines the substrate pocket.

It belongs to the MetA family.

It is found in the cytoplasm. It carries out the reaction L-homoserine + succinyl-CoA = O-succinyl-L-homoserine + CoA. Its pathway is amino-acid biosynthesis; L-methionine biosynthesis via de novo pathway; O-succinyl-L-homoserine from L-homoserine: step 1/1. Its function is as follows. Transfers a succinyl group from succinyl-CoA to L-homoserine, forming succinyl-L-homoserine. In vitro, can also use glutaryl-CoA as acyl donor. The sequence is that of Homoserine O-succinyltransferase from Thiothrix nivea (strain ATCC 35100 / DSM 5205 / JP2).